The primary structure comprises 252 residues: Imidazole glycerol phosphate synthase subunit HisF (252 aa).

Catalysis depends on residues Asp-11 and Asp-130.

This sequence belongs to the HisA/HisF family. Heterodimer of HisH and HisF.

Its subcellular location is the cytoplasm. It catalyses the reaction 5-[(5-phospho-1-deoxy-D-ribulos-1-ylimino)methylamino]-1-(5-phospho-beta-D-ribosyl)imidazole-4-carboxamide + L-glutamine = D-erythro-1-(imidazol-4-yl)glycerol 3-phosphate + 5-amino-1-(5-phospho-beta-D-ribosyl)imidazole-4-carboxamide + L-glutamate + H(+). The protein operates within amino-acid biosynthesis; L-histidine biosynthesis; L-histidine from 5-phospho-alpha-D-ribose 1-diphosphate: step 5/9. Its function is as follows. IGPS catalyzes the conversion of PRFAR and glutamine to IGP, AICAR and glutamate. The HisF subunit catalyzes the cyclization activity that produces IGP and AICAR from PRFAR using the ammonia provided by the HisH subunit. This chain is Imidazole glycerol phosphate synthase subunit HisF, found in Geobacillus kaustophilus (strain HTA426).